Consider the following 369-residue polypeptide: MKNISITNRKIEHVEICLYENVEFGSTLFEDVTLIHQSLPGFSLADVSTTTNFLGKKMSAPIIITGMTGGLPELGKINETIAEVIEELGLGMGVGSQRIAIEKKETKETFSIVRKKAPNSPIIANLGAPQFVKGYSLEQVEEAIQMIEADAIAIHFNSAQEVFQPEGEPNYSIEILYKLIDISKSLKVPIIIKESGSGLSMEVTKMFYENGIKYFDTSGTGGTSWVSVEMYRGLRRNNWKAESAKLFLDWGIPTAASIVEVRSIAQDGTIIGSGGVRNGLEVAKAIALGADIGGFALPALKAAVKGKESLMNFLKKVIFELKVAMFLSGNKTIGELKKTPIVIGKELRNWLDSRGINLSYYDSVRKRRV.

9-10 (RK) contacts substrate. FMN contacts are provided by residues Thr-65, 66-68 (GMT), Ser-96, and Asn-125. Residue 96–98 (SQR) participates in substrate binding. Gln-160 provides a ligand contact to substrate. A Mg(2+)-binding site is contributed by Glu-161. Residues Lys-193, Ser-218, Thr-223, 275 to 277 (GVR), and 296 to 297 (AL) each bind FMN.

It belongs to the IPP isomerase type 2 family. Homooctamer. Dimer of tetramers. It depends on FMN as a cofactor. Requires NADPH as cofactor. Mg(2+) serves as cofactor.

The protein resides in the cytoplasm. The enzyme catalyses isopentenyl diphosphate = dimethylallyl diphosphate. In terms of biological role, involved in the biosynthesis of isoprenoids. Catalyzes the 1,3-allylic rearrangement of the homoallylic substrate isopentenyl (IPP) to its allylic isomer, dimethylallyl diphosphate (DMAPP). This Sulfurisphaera tokodaii (strain DSM 16993 / JCM 10545 / NBRC 100140 / 7) (Sulfolobus tokodaii) protein is Isopentenyl-diphosphate delta-isomerase.